The following is a 122-amino-acid chain: Large ribosomal subunit protein uL14 (122 aa).

This sequence belongs to the universal ribosomal protein uL14 family. In terms of assembly, part of the 50S ribosomal subunit. Forms a cluster with proteins L3 and L19. In the 70S ribosome, L14 and L19 interact and together make contacts with the 16S rRNA in bridges B5 and B8.

In terms of biological role, binds to 23S rRNA. Forms part of two intersubunit bridges in the 70S ribosome. The protein is Large ribosomal subunit protein uL14 of Rhodospirillum centenum (strain ATCC 51521 / SW).